The primary structure comprises 119 residues: Large ribosomal subunit protein uL18 (119 aa).

This sequence belongs to the universal ribosomal protein uL18 family. As to quaternary structure, part of the 50S ribosomal subunit; part of the 5S rRNA/L5/L18/L25 subcomplex. Contacts the 5S and 23S rRNAs.

Its function is as follows. This is one of the proteins that bind and probably mediate the attachment of the 5S RNA into the large ribosomal subunit, where it forms part of the central protuberance. The chain is Large ribosomal subunit protein uL18 from Cereibacter sphaeroides (strain ATCC 17029 / ATH 2.4.9) (Rhodobacter sphaeroides).